We begin with the raw amino-acid sequence, 91 residues long: UPF0223 protein SAR1071 (91 aa).

It belongs to the UPF0223 family.

This Staphylococcus aureus (strain MRSA252) protein is UPF0223 protein SAR1071.